The following is a 196-amino-acid chain: Calcium channel flower (196 aa).

3 helical membrane passes run 36–56 (LGIV…LSII), 67–89 (IIQM…ICIE), and 114–134 (AVPP…GLIF).

Belongs to the calcium channel flower family. As to quaternary structure, homomultimer. Associates with the dally/ magu complex.

The protein resides in the cell membrane. It is found in the cytoplasmic vesicle. It localises to the secretory vesicle. Its subcellular location is the synaptic vesicle membrane. The protein localises to the presynaptic cell membrane. The protein resides in the endosome. Its activity is regulated as follows. Channel activity is inhibited by La(3+), which reduces Ca(2+) influx and thus inhibits it's function in promoting activity-dependent bulk endocytosis (ADBE) in response to high stimuli. In terms of biological role, transmembrane protein which mediates synaptic endocytosis, fitness-based cell culling, neuronal culling, morphogen gradient scaling, and calcium transport. Regulates synaptic endocytosis and hence couples exo- with endocytosis. Controls two major modes of synaptic vesicle (SV) endocytosis in the synaptic boutons of neuromuscular junctions (NMJs); Ca(2+) channel-independent Clathrin-mediated endocytosis (CME) in response to mild stimulation, and Ca(2+) channel-dependent activity-dependent bulk endocytosis (ADBE) in response to strong stimulation. Functions in ADBE and subsequent SV reformation from bulk endosomes by initiating Ca(2+) channel-dependent phosphatidylinositol 4,5-bisphosphate (PtdIns(4,5)P2) compartmentalization in synaptic boutons. There it acts at the periactive zone to provide the low Ca(2+) levels required to initiate Calcineurin activation and upregulate PtdIns(4,5)P2. Conversely PtdIns(4,5)P2 enhances fwe Ca(2+) channel-activity, establishing a positive feedback loop that induces PtdIns(4,5)P2 microdomain at the periactive zone. These microdomains trigger bulk membrane invagination (i.e. ADBE) by triggering actin polymerization while also promoting localization of fwe to bulk endosomes, thereby removing the ADBE trigger to reduce endocytosis and prevent excess membrane uptake. PtdIns(4,5)P2 then promotes SV reformation from the bulk endosomes, to coordinate ADBE and subsequent SV reformation. Different combinations of the flower isoforms at the cell membrane are also required for the identification and elimination of suboptimal or supernumerary cells during development, regeneration, and adulthood. Required for the recognition and elimination of unfit cells in the developing wing during cell competition. In the developing pupal retina, mediates the elimination of unwanted postmitotic neurons, including supernumerary photoreceptor neurons that form at the periphery of the retina and are contained within incomplete ommatidia units. Also required for efficient elimination and replacement of old neurons by newly generated neurons during regeneration in the adult brain following mechanical injury. Downstream of the flower fitness fingerprints, cells identified as unwanted or unfit are eliminated via apoptosis through the expression of ahuizotl (azot). However, the cells marked for elimination by the flower isoforms only undergo apoptosis if additional thresholds are met; (1) their neighboring fit/healthy cells express different levels of the fwe isoforms, and (2) the levels of the protective signal SPARC expressed by the loser or unwanted cells are unable to inhibit caspase activation. These additional thresholds for flower-mediated apoptosis, allows useful cells to recover from transient and limited stress before they are unnecessarily eliminated. Functions with dally and magu in a mechanism of scaling, which utilises apoptosis to ensure that the dpp morphogen gradient, which mediates organ growth, remains proportional to the size of the growing wing. In this mechanism, fwe represses dally- and Magu-dependent activity in expanding the gradient, and dally/Magu inhibits fwe-dependent apoptosis to keep cell death rate low. When the levels of these different proteins are optimally regulated the gradient correctly scales with organ growth but when this fails, fwe-mediated apoptosis is activated to trim the developing tissue to match the correct size of the gradient. The polypeptide is Calcium channel flower (Drosophila virilis (Fruit fly)).